A 589-amino-acid polypeptide reads, in one-letter code: Class I diterpene synthase 2, chloroplastic (589 aa).

5 residues coordinate Mg(2+): D328, D332, N472, T476, and E480. The DDXXD motif signature appears at 328–332 (DDFFD).

Belongs to the terpene synthase family. It depends on Mg(2+) as a cofactor. In terms of tissue distribution, mostly expressed in trichomes of leaves and fruits.

It is found in the plastid. Its subcellular location is the chloroplast. The catalysed reaction is 9alpha-copalyl diphosphate + H2O = (13S)-vitexifolin A + diphosphate. The enzyme catalyses peregrinol diphosphate = (13R)-9,13-epoxylabd-14-ene + diphosphate. It catalyses the reaction peregrinol diphosphate + H2O = viteagnusin D + diphosphate. It functions in the pathway secondary metabolite biosynthesis; terpenoid biosynthesis. Its function is as follows. Involved in the biosynthesis of labdane-type diterpenoid including cleroda-dienols, and peregrinol lactones and furan derivatives, dopaminergic diterpenoids that can bind to dopamine receptors in the human pituitary gland, have probably ability to lower prolactin levels, and are used to treat menstrual cycle disorders (e.g. premenstrual syndrome and mastodynia). Terpene synthase the catalyzes the conversion of peregrinol diphosphate to viteagnusin D and 9,13(R)-epoxy-labd-14-ene, and of syn-copalyl diphosophate to vitexifolin A. The polypeptide is Class I diterpene synthase 2, chloroplastic (Vitex agnus-castus (Chaste tree)).